Consider the following 350-residue polypeptide: Biotin synthase (350 aa).

The region spanning 42–269 (NEVQVSTLCS…QSHVRLSAGR (228 aa)) is the Radical SAM core domain. Residues cysteine 57, cysteine 61, and cysteine 64 each contribute to the [4Fe-4S] cluster site. [2Fe-2S] cluster-binding residues include cysteine 101, cysteine 132, cysteine 192, and arginine 264.

It belongs to the radical SAM superfamily. Biotin synthase family. Homodimer. Requires [4Fe-4S] cluster as cofactor. The cofactor is [2Fe-2S] cluster.

The catalysed reaction is (4R,5S)-dethiobiotin + (sulfur carrier)-SH + 2 reduced [2Fe-2S]-[ferredoxin] + 2 S-adenosyl-L-methionine = (sulfur carrier)-H + biotin + 2 5'-deoxyadenosine + 2 L-methionine + 2 oxidized [2Fe-2S]-[ferredoxin]. It functions in the pathway cofactor biosynthesis; biotin biosynthesis; biotin from 7,8-diaminononanoate: step 2/2. Its function is as follows. Catalyzes the conversion of dethiobiotin (DTB) to biotin by the insertion of a sulfur atom into dethiobiotin via a radical-based mechanism. The protein is Biotin synthase of Saccharophagus degradans (strain 2-40 / ATCC 43961 / DSM 17024).